The following is a 290-amino-acid chain: UPF0750 membrane protein YpjC (290 aa).

6 helical membrane passes run 9–29 (NIFF…HFNM), 47–67 (ALFH…IFFI), 75–95 (TMFV…SIFQ), 106–126 (DLAL…GIIF), 146–166 (FGIP…ILSL), and 179–199 (LVAV…GYAA).

The protein belongs to the UPF0750 family.

It localises to the cell membrane. The protein is UPF0750 membrane protein YpjC (ypjC) of Bacillus subtilis (strain 168).